Consider the following 435-residue polypeptide: Zinc finger CCCH domain-containing protein 10 (435 aa).

The tract at residues 1-36 (MPDRDSYANGTGSSGGGPGGGGSEEASGAGTGSGGA) is disordered. The segment covering 12 to 35 (GSSGGGPGGGGSEEASGAGTGSGG) has biased composition (gly residues). C3H1-type zinc fingers lie at residues 36–63 (ATSD…HPDM), 73–99 (KNEF…HGSK), and 134–161 (KEEV…HLQR). Residues 166–190 (DARGGGGTGGGGSTGSAPPGRRHDL) form a disordered region. A compositionally biased stretch (gly residues) spans 168-179 (RGGGGTGGGGST). An omega-N-methylarginine mark is found at Arg-186 and Arg-187. A coiled-coil region spans residues 235–281 (GVECRLLEEENALLRKRVEELKKQVSNLLATNEVLLEQNAQFRNQAK). Residues 315–331 (TTLSSQALQPRPVSQQE) show a composition bias toward polar residues. Residues 315–363 (TTLSSQALQPRPVSQQELVAPTGAPAAPPTNAAPPAAPPPPPPHLNPEI) are disordered. Positions 340-359 (AAPPTNAAPPAAPPPPPPHL) are enriched in pro residues.

It is found in the nucleus. In terms of biological role, specific regulator of miRNA biogenesis. Binds, via the C3H1-type zinc finger domains, to the binding motif 5'-GCAGCGC-3' on microRNA pri-MIR143 and negatively regulates the processing to mature microRNA. The sequence is that of Zinc finger CCCH domain-containing protein 10 (Zc3h10) from Mus musculus (Mouse).